The chain runs to 259 residues: 3'-5' ssDNA/RNA exonuclease TatD (259 aa).

Glutamate 92, histidine 128, and histidine 153 together coordinate a divalent metal cation.

Belongs to the metallo-dependent hydrolases superfamily. TatD-type hydrolase family. TatD subfamily. In terms of assembly, monomer. Mg(2+) is required as a cofactor.

The protein resides in the cytoplasm. 3'-5' exonuclease that prefers single-stranded DNA and RNA. May play a role in the H(2)O(2)-induced DNA damage repair. The sequence is that of 3'-5' ssDNA/RNA exonuclease TatD from Erwinia tasmaniensis (strain DSM 17950 / CFBP 7177 / CIP 109463 / NCPPB 4357 / Et1/99).